The following is a 72-amino-acid chain: Translation initiation factor IF-1 (72 aa).

Residues M1–R72 enclose the S1-like domain.

This sequence belongs to the IF-1 family. As to quaternary structure, component of the 30S ribosomal translation pre-initiation complex which assembles on the 30S ribosome in the order IF-2 and IF-3, IF-1 and N-formylmethionyl-tRNA(fMet); mRNA recruitment can occur at any time during PIC assembly.

It is found in the cytoplasm. Functionally, one of the essential components for the initiation of protein synthesis. Stabilizes the binding of IF-2 and IF-3 on the 30S subunit to which N-formylmethionyl-tRNA(fMet) subsequently binds. Helps modulate mRNA selection, yielding the 30S pre-initiation complex (PIC). Upon addition of the 50S ribosomal subunit IF-1, IF-2 and IF-3 are released leaving the mature 70S translation initiation complex. In Vibrio cholerae serotype O1 (strain ATCC 39541 / Classical Ogawa 395 / O395), this protein is Translation initiation factor IF-1.